A 427-amino-acid chain; its full sequence is UDP-N-acetylglucosamine 1-carboxyvinyltransferase (427 aa).

24–25 contributes to the phosphoenolpyruvate binding site; that stretch reads KN. Arg-95 is a UDP-N-acetyl-alpha-D-glucosamine binding site. Cys-119 acts as the Proton donor in catalysis. A 2-(S-cysteinyl)pyruvic acid O-phosphothioketal modification is found at Cys-119. UDP-N-acetyl-alpha-D-glucosamine is bound by residues 124–128, Asp-308, and Val-330; that span reads RPVDQ.

This sequence belongs to the EPSP synthase family. MurA subfamily.

Its subcellular location is the cytoplasm. The enzyme catalyses phosphoenolpyruvate + UDP-N-acetyl-alpha-D-glucosamine = UDP-N-acetyl-3-O-(1-carboxyvinyl)-alpha-D-glucosamine + phosphate. Its pathway is cell wall biogenesis; peptidoglycan biosynthesis. Its function is as follows. Cell wall formation. Adds enolpyruvyl to UDP-N-acetylglucosamine. This Deinococcus geothermalis (strain DSM 11300 / CIP 105573 / AG-3a) protein is UDP-N-acetylglucosamine 1-carboxyvinyltransferase.